A 204-amino-acid chain; its full sequence is Protein GrpE (204 aa).

A compositionally biased stretch (basic and acidic residues) spans 1–12 (MSNEEQAQKDDA). A disordered region spans residues 1–32 (MSNEEQAQKDDAQPVNEAAIDATAEQADAEVE). Over residues 17–26 (EAAIDATAEQ) the composition is skewed to low complexity.

Belongs to the GrpE family. Homodimer.

Its subcellular location is the cytoplasm. In terms of biological role, participates actively in the response to hyperosmotic and heat shock by preventing the aggregation of stress-denatured proteins, in association with DnaK and GrpE. It is the nucleotide exchange factor for DnaK and may function as a thermosensor. Unfolded proteins bind initially to DnaJ; upon interaction with the DnaJ-bound protein, DnaK hydrolyzes its bound ATP, resulting in the formation of a stable complex. GrpE releases ADP from DnaK; ATP binding to DnaK triggers the release of the substrate protein, thus completing the reaction cycle. Several rounds of ATP-dependent interactions between DnaJ, DnaK and GrpE are required for fully efficient folding. This Pseudoalteromonas atlantica (strain T6c / ATCC BAA-1087) protein is Protein GrpE.